A 573-amino-acid chain; its full sequence is 60 kDa heat shock protein, mitochondrial (573 aa).

The transit peptide at 1-26 (MLRLPTVFRQMRPVSRVLAPHLTRAY) directs the protein to the mitochondrion. Lys-31 bears the N6-succinyllysine mark. A phosphoserine mark is found at Ser-67 and Ser-70. Residue Lys-75 participates in ATP binding. Lys-75 carries the post-translational modification N6-acetyllysine. Residue Lys-82 is modified to N6-acetyllysine; alternate. An N6-succinyllysine; alternate modification is found at Lys-82. An N6-acetyllysine modification is found at Lys-87. Tyr-90 carries the post-translational modification Phosphotyrosine. Lys-91 is subject to N6-acetyllysine. Residue 111 to 115 (DGTTT) participates in ATP binding. N6-acetyllysine; alternate is present on Lys-125. Lys-125 carries the N6-succinyllysine; alternate modification. Lys-130 is modified (N6-acetyllysine). At Lys-133 the chain carries N6-acetyllysine; alternate. Residue Lys-133 is modified to N6-succinyllysine; alternate. Lys-133 carries the post-translational modification N6-malonyllysine; alternate. At Lys-156 the chain carries N6-acetyllysine. 5 positions are modified to N6-acetyllysine; alternate: Lys-191, Lys-202, Lys-205, Lys-218, and Lys-236. N6-succinyllysine; alternate occurs at positions 191, 202, 205, 218, and 236. Lys-249 carries the post-translational modification N6-acetyllysine. Lys-250 bears the N6-acetyllysine; alternate mark. The residue at position 250 (Lys-250) is an N6-succinyllysine; alternate. 2 positions are modified to N6-acetyllysine: Lys-269 and Lys-292. The residue at position 301 (Lys-301) is an N6-succinyllysine. An N6-acetyllysine modification is found at Lys-314. Lys-352 is subject to N6-acetyllysine; alternate. Lys-352 is subject to N6-succinyllysine; alternate. Residues Lys-359 and Lys-389 each carry the N6-acetyllysine modification. Lys-396 bears the N6-acetyllysine; alternate mark. Lys-396 carries the post-translational modification N6-succinyllysine; alternate. Ser-410 is modified (phosphoserine). Gly-440 contacts ATP. Lys-469 is modified (N6-acetyllysine). Residue Lys-481 is modified to N6-acetyllysine; alternate. Residue Lys-481 is modified to N6-succinyllysine; alternate. Ser-488 bears the Phosphoserine mark. Residue Asp-520 participates in ATP binding. A Glycyl lysine isopeptide (Lys-Gly) (interchain with G-Cter in SUMO2) cross-link involves residue Lys-551.

Belongs to the chaperonin (HSP60) family. In terms of assembly, homoheptamer arranged in a ring structure. The functional units of these chaperonins consist of heptameric rings of the large subunit Hsp60, which function as a back-to-back double ring. Interacts with 2 heptameric Hsp10 rings to form the symmetrical football complex. Interacts with HRAS. Interacts with ATAD3A. Interacts with ETFBKMT and EEF1AKMT3. Interacts with MFHAS1. (Microbial infection) Interacts with hepatitis B virus/HBV protein X. As to quaternary structure, (Microbial infection) Interacts with HTLV-1 protein p40tax.

It is found in the mitochondrion matrix. The enzyme catalyses ATP + H2O + a folded polypeptide = ADP + phosphate + an unfolded polypeptide.. Its function is as follows. Chaperonin implicated in mitochondrial protein import and macromolecular assembly. Together with Hsp10, facilitates the correct folding of imported proteins. May also prevent misfolding and promote the refolding and proper assembly of unfolded polypeptides generated under stress conditions in the mitochondrial matrix. The functional units of these chaperonins consist of heptameric rings of the large subunit Hsp60, which function as a back-to-back double ring. In a cyclic reaction, Hsp60 ring complexes bind one unfolded substrate protein per ring, followed by the binding of ATP and association with 2 heptameric rings of the co-chaperonin Hsp10. This leads to sequestration of the substrate protein in the inner cavity of Hsp60 where, for a certain period of time, it can fold undisturbed by other cell components. Synchronous hydrolysis of ATP in all Hsp60 subunits results in the dissociation of the chaperonin rings and the release of ADP and the folded substrate protein. The sequence is that of 60 kDa heat shock protein, mitochondrial (HSPD1) from Homo sapiens (Human).